The primary structure comprises 588 residues: Progranulin (588 aa).

An N-terminal signal peptide occupies residues 1–17 (MWILVSWLALVARLVAG). Residue Asn-38 is glycosylated (N-linked (GlcNAc...) asparagine). 12 disulfides stabilise this stretch: Cys-125-Cys-138, Cys-132-Cys-148, Cys-281-Cys-293, Cys-287-Cys-303, Cys-294-Cys-311, Cys-304-Cys-318, Cys-312-Cys-325, Cys-319-Cys-332, Cys-363-Cys-375, Cys-369-Cys-385, Cys-394-Cys-407, and Cys-401-Cys-413. Asn-372 carries an N-linked (GlcNAc...) asparagine glycan. Asn-525 is a glycosylation site (N-linked (GlcNAc...) asparagine).

This sequence belongs to the granulin family. Progranulin is secreted as a homodimer. Interacts with SLPI; interaction protects progranulin from proteolysis. Interacts (via region corresponding to granulin-7 peptide) with CTSD; stabilizes CTSD and increases its proteolytic activity. Interacts (via region corresponding to granulin-7 peptide) with SORT1; this interaction mediates endocytosis and lysosome delivery of progranulin; interaction occurs at the neuronal cell surface in a stressed nervous system. Interacts with PSAP; facilitates lysosomal delivery of progranulin from the extracellular space and the biosynthetic pathway. Forms a complex with PSAP and M6PR; PSAP bridges the binding between progranulin and M6PR. Forms a complex with PSAP and SORT1; progranulin bridges the interaction between PSAP and SORT1; facilitates lysosomal targeting of PSAP via SORT1; interaction enhances PSAP uptake in primary cortical neurons. Interacts (via regions corresponding to granulin-2 and granulin-7 peptides) with GBA1; this interaction prevents aggregation of GBA1-SCARB2 complex via interaction with HSPA1A upon stress. Interacts (via region corresponding to granulin-7 peptide) with HSPA1A; mediates recruitment of HSPA1A to GBA1 and prevents GBA1 aggregation in response to stress. Cleaved by ELANE; proteolysis is blocked by SLPI and is concentration- and time-dependent and induces CXCL8/IL-8 production; granulin-3 and granulin-4 are resistant to ELANE. Cleaved by CTSL in lysosome thus regulating the maturation and turnover of progranulin within the lysosome. Ubiquitous; most abundant in the spleen and several tissues of endocrine significance.

It localises to the secreted. Its subcellular location is the lysosome. Secreted protein that acts as a key regulator of lysosomal function and as a growth factor involved in inflammation, wound healing and cell proliferation. Regulates protein trafficking to lysosomes, and also the activity of lysosomal enzymes. Also facilitates the acidification of lysosomes, causing degradation of mature CTSD by CTSB. In addition, functions as a wound-related growth factor that acts directly on dermal fibroblasts and endothelial cells to promote division, migration and the formation of capillary-like tubule structures. Also promotes epithelial cell proliferation by blocking TNF-mediated neutrophil activation preventing release of oxidants and proteases. Moreover, modulates inflammation in neurons by preserving neurons survival, axonal outgrowth and neuronal integrity. Its function is as follows. Inhibits epithelial cell proliferation and induces epithelial cells to secrete IL-8. In terms of biological role, stabilizes CTSD through interaction with CTSD leading to maintain its aspartic-type peptidase activity. This Rattus norvegicus (Rat) protein is Progranulin (Grn).